A 147-amino-acid chain; its full sequence is Hemoglobin subunit epsilon (147 aa).

One can recognise a Globin domain in the interval 3-147 (HFTAEEKAAV…VAIALAHKYH (145 aa)). Ser-14 and Ser-51 each carry phosphoserine. Residues His-64 and His-93 each contribute to the heme b site.

It belongs to the globin family. Heterotetramer of two alpha chains and two epsilon chains in early embryonic hemoglobin Gower-2; two zeta chains and two epsilon chains in early embryonic hemoglobin Gower-1. Red blood cells.

The epsilon chain is a beta-type chain of early mammalian embryonic hemoglobin. This Symphalangus syndactylus (Siamang) protein is Hemoglobin subunit epsilon (HBE1).